Here is a 393-residue protein sequence, read N- to C-terminus: NAD(P)H-quinone oxidoreductase subunit H, chloroplastic (393 aa).

The protein belongs to the complex I 49 kDa subunit family. In terms of assembly, NDH is composed of at least 16 different subunits, 5 of which are encoded in the nucleus.

The protein localises to the plastid. The protein resides in the chloroplast thylakoid membrane. It carries out the reaction a plastoquinone + NADH + (n+1) H(+)(in) = a plastoquinol + NAD(+) + n H(+)(out). It catalyses the reaction a plastoquinone + NADPH + (n+1) H(+)(in) = a plastoquinol + NADP(+) + n H(+)(out). Its function is as follows. NDH shuttles electrons from NAD(P)H:plastoquinone, via FMN and iron-sulfur (Fe-S) centers, to quinones in the photosynthetic chain and possibly in a chloroplast respiratory chain. The immediate electron acceptor for the enzyme in this species is believed to be plastoquinone. Couples the redox reaction to proton translocation, and thus conserves the redox energy in a proton gradient. In Pelargonium hortorum (Common geranium), this protein is NAD(P)H-quinone oxidoreductase subunit H, chloroplastic.